Reading from the N-terminus, the 259-residue chain is Small ribosomal subunit protein uS2 (259 aa).

The segment at 234 to 259 is disordered; it reads VAEDSEEVSTVDADAITAEDFETEEV. The span at 250–259 shows a compositional bias: acidic residues; it reads TAEDFETEEV.

It belongs to the universal ribosomal protein uS2 family.

In Sulfurimonas denitrificans (strain ATCC 33889 / DSM 1251) (Thiomicrospira denitrificans (strain ATCC 33889 / DSM 1251)), this protein is Small ribosomal subunit protein uS2.